The chain runs to 396 residues: Proteasome-activating nucleotidase (396 aa).

Residues 16–57 adopt a coiled-coil conformation; sequence VTYLKRRIRQLELQVRMLEADKERLERELSRLRSEMSRLRQP. ATP is bound by residues 181–186 and His-320; that span reads GCGKTL. Residues 394 to 396 form a docks into pockets in the proteasome alpha-ring to cause gate opening region; sequence IYG.

The protein belongs to the AAA ATPase family. As to quaternary structure, homohexamer. The hexameric complex has a two-ring architecture resembling a top hat that caps the 20S proteasome core at one or both ends. Upon ATP-binding, the C-terminus of PAN interacts with the alpha-rings of the proteasome core by binding to the intersubunit pockets.

Its subcellular location is the cytoplasm. ATPase which is responsible for recognizing, binding, unfolding and translocation of substrate proteins into the archaeal 20S proteasome core particle. Is essential for opening the gate of the 20S proteasome via an interaction with its C-terminus, thereby allowing substrate entry and access to the site of proteolysis. Thus, the C-termini of the proteasomal ATPase function like a 'key in a lock' to induce gate opening and therefore regulate proteolysis. Unfolding activity requires energy from ATP hydrolysis, whereas ATP binding alone promotes ATPase-20S proteasome association which triggers gate opening, and supports translocation of unfolded substrates. The protein is Proteasome-activating nucleotidase of Pyrococcus furiosus (strain ATCC 43587 / DSM 3638 / JCM 8422 / Vc1).